The following is a 149-amino-acid chain: Nucleoside diphosphate kinase (149 aa).

6 residues coordinate ATP: Lys11, Phe59, Arg87, Thr93, Arg104, and Asn114. Residue His117 is the Pros-phosphohistidine intermediate of the active site.

It belongs to the NDK family. As to quaternary structure, homotetramer. It depends on Mg(2+) as a cofactor.

It localises to the cytoplasm. It carries out the reaction a 2'-deoxyribonucleoside 5'-diphosphate + ATP = a 2'-deoxyribonucleoside 5'-triphosphate + ADP. It catalyses the reaction a ribonucleoside 5'-diphosphate + ATP = a ribonucleoside 5'-triphosphate + ADP. Major role in the synthesis of nucleoside triphosphates other than ATP. The ATP gamma phosphate is transferred to the NDP beta phosphate via a ping-pong mechanism, using a phosphorylated active-site intermediate. The polypeptide is Nucleoside diphosphate kinase (Treponema pallidum (strain Nichols)).